A 900-amino-acid chain; its full sequence is Chromodomain-helicase-DNA-binding protein 1-like (900 aa).

The 166-residue stretch at 52–217 (VQCFHCQNGC…YSLLCVVEPD (166 aa)) folds into the Helicase ATP-binding domain. 65–72 (DEMGLGKT) is an ATP binding site. The short motif at 168 to 171 (DEAH) is the DEAH box element. In terms of domain architecture, Helicase C-terminal spans 345-507 (LLDRLLAFLY…QKPSAEADFQ (163 aa)). Ser534 carries the post-translational modification Phosphoserine. The disordered stretch occupies residues 546 to 569 (PDALPAAAAAGGGSLEPEEGSELE). The regulatory linker segment (RLS) stretch occupies residues 606–640 (TLLEKTSHGGRTLRNKGSVLIPGLAEGPIKRKKIL). A phosphoserine mark is found at Ser612, Ser623, and Ser641. A required for ATPase activity region spans residues 620 to 678 (NKGSVLIPGLAEGPIKRKKILSPEELEDRRKKRQEAAAKRKRLMEEKRKEKEEAEHRKK). The segment at 641-673 (SPEELEDRRKKRQEAAAKRKRLMEEKRKEKEEA) is disordered. A coiled-coil region spans residues 643-680 (EELEDRRKKRQEAAAKRKRLMEEKRKEKEEAEHRKKMA). Residues 653–673 (QEAAAKRKRLMEEKRKEKEEA) are compositionally biased toward basic and acidic residues. In terms of domain architecture, Macro spans 709-900 (SAELAYEDLD…ASSSSAPLVP (192 aa)). Ser894 is modified (phosphoserine).

Belongs to the SNF2/RAD54 helicase family. Interacts with nucleosomes; interacts with the acidic patch of histones. Interacts (via macro domain) with PARP1; interacts only when PARP1 is poly-ADP-ribosylated (PARylated). Interacts with CIAO1.

The protein localises to the nucleus. It is found in the chromosome. The catalysed reaction is ATP + H2O = ADP + phosphate + H(+). Its activity is regulated as follows. Adopts an inactive conformation in absence of DNA damage. Binding to poly-ADP-ribosylated histones activates the ATP-dependent chromatin remodeler activity. In terms of biological role, ATP-dependent chromatin remodeler that mediates chromatin-remodeling following DNA damage. Recruited to DNA damage sites through interaction with poly-ADP-ribose: specifically recognizes and binds histones that are poly-ADP-ribosylated on serine residues in response to DNA damage. Poly-ADP-ribose-binding activates the ATP-dependent chromatin remodeler activity, thereby regulating chromatin during DNA repair. Catalyzes nucleosome sliding away from DNA breaks in an ATP-dependent manner. Chromatin remodeling activity promotes PARP2 removal from chromatin. This Mus musculus (Mouse) protein is Chromodomain-helicase-DNA-binding protein 1-like (Chd1l).